Consider the following 576-residue polypeptide: Chaperonin CPN60-2, mitochondrial (576 aa).

The transit peptide at 1 to 34 directs the protein to the mitochondrion; it reads MYRAAASLASKARQAGSSSAARQVGSRLAWSRNY.

Belongs to the chaperonin (HSP60) family.

Its subcellular location is the mitochondrion. Implicated in mitochondrial protein import and macromolecular assembly. May facilitate the correct folding of imported proteins. May also prevent misfolding and promote the refolding and proper assembly of unfolded polypeptides generated under stress conditions in the mitochondrial matrix. This Zea mays (Maize) protein is Chaperonin CPN60-2, mitochondrial (CPN60II).